The chain runs to 156 residues: Ribosomal RNA large subunit methyltransferase H (156 aa).

Residues Leu-73, Gly-104, and Ile-123–Leu-128 contribute to the S-adenosyl-L-methionine site.

Belongs to the RNA methyltransferase RlmH family. As to quaternary structure, homodimer.

The protein resides in the cytoplasm. It carries out the reaction pseudouridine(1915) in 23S rRNA + S-adenosyl-L-methionine = N(3)-methylpseudouridine(1915) in 23S rRNA + S-adenosyl-L-homocysteine + H(+). Specifically methylates the pseudouridine at position 1915 (m3Psi1915) in 23S rRNA. This Herminiimonas arsenicoxydans protein is Ribosomal RNA large subunit methyltransferase H.